The sequence spans 168 residues: NADH-quinone oxidoreductase subunit I (168 aa).

2 consecutive 4Fe-4S ferredoxin-type domains span residues 58–88 (LRRY…IEAG) and 99–128 (VRYD…EGPN). [4Fe-4S] cluster-binding residues include Cys68, Cys71, Cys74, Cys78, Cys108, Cys111, Cys114, and Cys118.

Belongs to the complex I 23 kDa subunit family. In terms of assembly, NDH-1 is composed of 14 different subunits. Subunits NuoA, H, J, K, L, M, N constitute the membrane sector of the complex. Requires [4Fe-4S] cluster as cofactor.

The protein localises to the cell inner membrane. It carries out the reaction a quinone + NADH + 5 H(+)(in) = a quinol + NAD(+) + 4 H(+)(out). Functionally, NDH-1 shuttles electrons from NADH, via FMN and iron-sulfur (Fe-S) centers, to quinones in the respiratory chain. The immediate electron acceptor for the enzyme in this species is believed to be ubiquinone. Couples the redox reaction to proton translocation (for every two electrons transferred, four hydrogen ions are translocated across the cytoplasmic membrane), and thus conserves the redox energy in a proton gradient. This Bradyrhizobium diazoefficiens (strain JCM 10833 / BCRC 13528 / IAM 13628 / NBRC 14792 / USDA 110) protein is NADH-quinone oxidoreductase subunit I.